The primary structure comprises 373 residues: tRNA-specific 2-thiouridylase MnmA (373 aa).

ATP-binding positions include 12 to 19 (GMSGGVDS) and Met38. Positions 98 to 100 (NPD) are interaction with target base in tRNA. The active-site Nucleophile is the Cys103. Cys103 and Cys200 are disulfide-bonded. Residue Gly127 participates in ATP binding. Positions 150–152 (KDQ) are interaction with tRNA. Residue Cys200 is the Cysteine persulfide intermediate of the active site. Residues 312–313 (RY) are interaction with tRNA.

Belongs to the MnmA/TRMU family.

The protein localises to the cytoplasm. The catalysed reaction is S-sulfanyl-L-cysteinyl-[protein] + uridine(34) in tRNA + AH2 + ATP = 2-thiouridine(34) in tRNA + L-cysteinyl-[protein] + A + AMP + diphosphate + H(+). Its function is as follows. Catalyzes the 2-thiolation of uridine at the wobble position (U34) of tRNA, leading to the formation of s(2)U34. In Streptococcus pneumoniae serotype 19F (strain G54), this protein is tRNA-specific 2-thiouridylase MnmA.